A 364-amino-acid chain; its full sequence is Guanine nucleotide-binding protein alpha-6 subunit (364 aa).

Residues 1-29 (MGAGATGLRGARLSPEERANSSKSRAIDR) form a disordered region. Residue glycine 2 is the site of N-myristoyl glycine attachment. Over residues 14-29 (SPEERANSSKSRAIDR) the composition is skewed to basic and acidic residues. The 324-residue stretch at 40 to 363 (NRFKILLLGT…NENLRSAGLH (324 aa)) folds into the G-alpha domain. Residues 43 to 56 (KILLLGTAESGKST) are G1 motif. GTP is bound by residues 48–55 (GTAESGKS), 186–192 (VHCRIST), 211–215 (DVGGQ), 280–283 (NKYD), and alanine 335. Positions 55 and 192 each coordinate Mg(2+). A G2 motif region spans residues 184–192 (DIVHCRIST). Residues 207 to 216 (FKMVDVGGQR) form a G3 motif region. The G4 motif stretch occupies residues 276-283 (VLFLNKYD). Residues 333 to 338 (TTATDT) are G5 motif.

This sequence belongs to the G-alpha family. In terms of assembly, g proteins are composed of 3 units; alpha, beta and gamma. The alpha chain contains the guanine nucleotide binding site.

Functionally, guanine nucleotide-binding proteins (G proteins) are involved as modulators or transducers in various transmembrane signaling systems. The polypeptide is Guanine nucleotide-binding protein alpha-6 subunit (gpa-6) (Caenorhabditis elegans).